The sequence spans 238 residues: Ribosomal RNA small subunit methyltransferase G (238 aa).

S-adenosyl-L-methionine contacts are provided by residues Gly99, Leu104, 122–124, 150–151, and Arg164; these read DAT and VE.

Belongs to the methyltransferase superfamily. RNA methyltransferase RsmG family.

Its subcellular location is the cytoplasm. Its function is as follows. Specifically methylates the N7 position of a guanine in 16S rRNA. This is Ribosomal RNA small subunit methyltransferase G from Chlorobium luteolum (strain DSM 273 / BCRC 81028 / 2530) (Pelodictyon luteolum).